The primary structure comprises 138 residues: Putative membrane protein insertion efficiency factor (138 aa).

The segment at 71–138 is disordered; that stretch reads YDPVPGTPEA…GTPSHTRGEN (68 aa). The segment covering 81–113 has biased composition (basic and acidic residues); it reads RQWRELHPETARSKNEPIHDLTDDNPRDHEPAL. Polar residues predominate over residues 123-138; sequence PGSTHTGTPSHTRGEN.

The protein belongs to the UPF0161 family.

The protein localises to the cell membrane. Its function is as follows. Could be involved in insertion of integral membrane proteins into the membrane. The sequence is that of Putative membrane protein insertion efficiency factor from Cutibacterium acnes (strain DSM 16379 / KPA171202) (Propionibacterium acnes).